The primary structure comprises 129 residues: Protein Turandot A1 (129 aa).

Residues 1–21 (MNSSTALMCFALLLISPLCMG) form the signal peptide. N49 carries an N-linked (GlcNAc...) asparagine glycan.

Belongs to the Turandot family.

It is found in the secreted. A humoral factor that plays a role in stress tolerance; gives increased resistance to the lethal effects of bacterial challenge and stress. Regulated by the JAK/STAT pathway and NF-KB-like Relish pathway in the fat body, upd3 in the hemocytes and Mekk1 in response to septic injury and consequent immune response. The chain is Protein Turandot A1 (TotA1) from Drosophila simulans (Fruit fly).